The sequence spans 427 residues: Putative F-box/FBD/LRR-repeat protein At4g13965 (427 aa).

Residues 13 to 61 (ADRISQLPEALIIQILSLLPTEVAVTTSVLSKQWQFLWKMLPKLNFDSL) form the F-box domain. LRR repeat units follow at residues 67–93 (FKTFSKNVKRALLSHKAPVLHSLHLIV), 98–122 (CNSMNTAKLIGIAFACNLRKLVLEV), 141–168 (TLELKYSILMDVPSSICLKSLRTLHLHY), 169–194 (VDFKDNESALNLLSGCPNLENLVVHR), 213–241 (LTIYTSSTVDPRAGYVINSPSLTYLKIVG), and 258–284 (SMIVSSQIINKNLLESLTSVKRLFLEF). The 51-residue stretch at 346 to 396 (KWNKPKIVPECLLFHLETFMWKGYEWKRNDETEVAKYILSNTNRLKRATFF) folds into the FBD domain.

This Arabidopsis thaliana (Mouse-ear cress) protein is Putative F-box/FBD/LRR-repeat protein At4g13965.